Here is a 102-residue protein sequence, read N- to C-terminus: MPGQRIRIKLKAYDHELLDESAKKIVEVAKSTNSKVSGPIPLPTERTLYCVLRSPMKHKDSREHFEKRVHKRLIDIIDPSPKTIDALMRINLPAGVDVEIKL.

The protein belongs to the universal ribosomal protein uS10 family. As to quaternary structure, part of the 30S ribosomal subunit.

In terms of biological role, involved in the binding of tRNA to the ribosomes. The protein is Small ribosomal subunit protein uS10 of Thermotoga neapolitana (strain ATCC 49049 / DSM 4359 / NBRC 107923 / NS-E).